Consider the following 24-residue polypeptide: Coenzyme PQQ synthesis protein A (24 aa).

The pyrroloquinoline quinone (Glu-Tyr) cross-link spans 16 to 20 (EVTMY).

It belongs to the PqqA family.

It participates in cofactor biosynthesis; pyrroloquinoline quinone biosynthesis. In terms of biological role, required for coenzyme pyrroloquinoline quinone (PQQ) biosynthesis. PQQ is probably formed by cross-linking a specific glutamate to a specific tyrosine residue and excising these residues from the peptide. The sequence is that of Coenzyme PQQ synthesis protein A from Methylococcus capsulatus (strain ATCC 33009 / NCIMB 11132 / Bath).